Consider the following 393-residue polypeptide: Fructose-bisphosphate aldolase 4, cytosolic (393 aa).

A substrate-binding site is contributed by Arg-73. Cys-207 carries the post-translational modification S-glutathionyl cysteine; transient; alternate. Cys-207 carries the S-nitrosocysteine; transient; alternate modification. Glu-217 (proton acceptor) is an active-site residue. Lys-259 (schiff-base intermediate with dihydroxyacetone-P) is an active-site residue. Substrate is bound by residues 301-303 (SGG) and Arg-333.

Belongs to the class I fructose-bisphosphate aldolase family. As to quaternary structure, homotetramer. S-glutathionylated at Cys-207. Post-translationally, S-nitrosylated at Cys-207. In terms of tissue distribution, highly expressed in flowers.

It is found in the cytoplasm. The protein resides in the cytosol. The enzyme catalyses beta-D-fructose 1,6-bisphosphate = D-glyceraldehyde 3-phosphate + dihydroxyacetone phosphate. Its pathway is carbohydrate degradation; glycolysis; D-glyceraldehyde 3-phosphate and glycerone phosphate from D-glucose: step 4/4. Functionally, fructose-bisphosphate aldolase that plays a key role in glycolysis and gluconeogenesis. In Arabidopsis thaliana (Mouse-ear cress), this protein is Fructose-bisphosphate aldolase 4, cytosolic.